Here is a 205-residue protein sequence, read N- to C-terminus: MSDIVWHQHSIDKQSRADQKGQKPILLWFTGLSGSGKSTLAGALERALFDAGFHTYLLDGDNVRHGLCKDLGFSLDDRDENLRRVGEVAKLMVDAGLVVLSAFISPTRAERERVRALFDDGQFIEVHVSTPIEVCEARDPKGLYSKARAGEIKNFTGISASYEVPTAAELIIDTSKGDLATQVSALLDYLAAIQVIDSEKLKKAI.

Position 31–38 (31–38 (GLSGSGKS)) interacts with ATP. The Phosphoserine intermediate role is filled by Ser105.

It belongs to the APS kinase family.

It carries out the reaction adenosine 5'-phosphosulfate + ATP = 3'-phosphoadenylyl sulfate + ADP + H(+). It functions in the pathway sulfur metabolism; hydrogen sulfide biosynthesis; sulfite from sulfate: step 2/3. In terms of biological role, catalyzes the synthesis of activated sulfate. This Shewanella halifaxensis (strain HAW-EB4) protein is Adenylyl-sulfate kinase.